Consider the following 120-residue polypeptide: Large ribosomal subunit protein uL18 (120 aa).

Belongs to the universal ribosomal protein uL18 family. As to quaternary structure, part of the 50S ribosomal subunit; part of the 5S rRNA/L5/L18/L25 subcomplex. Contacts the 5S and 23S rRNAs.

In terms of biological role, this is one of the proteins that bind and probably mediate the attachment of the 5S RNA into the large ribosomal subunit, where it forms part of the central protuberance. In Paramagnetospirillum magneticum (strain ATCC 700264 / AMB-1) (Magnetospirillum magneticum), this protein is Large ribosomal subunit protein uL18.